The following is a 308-amino-acid chain: Ribonuclease Z (308 aa).

Zn(2+) is bound by residues His-60, His-62, Asp-64, His-65, His-140, Asp-209, and His-269. Asp-64 acts as the Proton acceptor in catalysis.

The protein belongs to the RNase Z family. In terms of assembly, homodimer. The cofactor is Zn(2+).

The catalysed reaction is Endonucleolytic cleavage of RNA, removing extra 3' nucleotides from tRNA precursor, generating 3' termini of tRNAs. A 3'-hydroxy group is left at the tRNA terminus and a 5'-phosphoryl group is left at the trailer molecule.. Its function is as follows. Zinc phosphodiesterase, which displays some tRNA 3'-processing endonuclease activity. Probably involved in tRNA maturation, by removing a 3'-trailer from precursor tRNA. In Methanococcus maripaludis (strain DSM 14266 / JCM 13030 / NBRC 101832 / S2 / LL), this protein is Ribonuclease Z.